The chain runs to 271 residues: HLPQVSSSLHSRAATSVVDLNGNEIQLHDMLSGHYLTTANAPVLESTALFNNNNNFNHDVVNGLNRDPSPTFPTKQAVKKDRHSKIYTSQGPRDRRVRLSIGIARKFFDLQEMLGFDKPSKTLDWLLTKSKTAVKELVQSKSTKSNSSSPCDDCEEVVSVESENVTDHSKGKSLKANNKCKEAMDSHQAAAKESRAKARARARERTKEKMCIKQLNEAIVLRNHQFEVSGTREAFVHPVFGFHQQNYGNTSHENWDQSNFASQSNQLCAIL.

The segment at leucine 64 to lysine 85 is disordered. Residues lysine 79–leucine 137 enclose the TCP domain. The R domain occupies lysine 192–lysine 209.

Its subcellular location is the nucleus. In terms of biological role, involved in the dorsovental asymmetry of flowers. Retards growth rate and reduces organ number in the dorsal region of flowers. The polypeptide is Transcription factor CYCLOIDEA (CYC) (Antirrhinum cirrhigerum (Snapdragon)).